Here is a 488-residue protein sequence, read N- to C-terminus: Annexin A7 (488 aa).

Residues 1-18 (MSYPGYPPTGYPPFPGYP) show a composition bias toward pro residues. Disordered regions lie at residues 1 to 49 (MSYP…YPQV) and 71 to 143 (GYPG…PTYP). A repeat-rich region region spans residues 1 to 143 (MSYPGYPPTG…QYPGGQPTYP (143 aa)). Residues 5 to 20 (GYPPTGYPPFPGYPPA) are 3 X 5 AA tandem repeats of G-Y-P-P-X. The segment covering 89–102 (PGQGFGVPPGGAGF) has biased composition (gly residues). Annexin repeat units lie at residues 185–256 (FDAI…ALFM), 257–328 (PPTY…SMCQ), 340–412 (QMAQ…TILQ), and 416–487 (NRPA…AIVG). The residue at position 233 (Lys-233) is an N6-acetyllysine.

The protein belongs to the annexin family. Interacts with PDCD6. In terms of tissue distribution, isoform 1 is expressed in brain, heart and skeletal muscle. Isoform 2 is more abundant in liver, lung, kidney, spleen, fibroblasts and placenta.

In terms of biological role, calcium/phospholipid-binding protein which promotes membrane fusion and is involved in exocytosis. The sequence is that of Annexin A7 (ANXA7) from Homo sapiens (Human).